A 282-amino-acid chain; its full sequence is 2-dehydro-3-deoxyphosphooctonate aldolase (282 aa).

Belongs to the KdsA family.

Its subcellular location is the cytoplasm. The catalysed reaction is D-arabinose 5-phosphate + phosphoenolpyruvate + H2O = 3-deoxy-alpha-D-manno-2-octulosonate-8-phosphate + phosphate. The protein operates within carbohydrate biosynthesis; 3-deoxy-D-manno-octulosonate biosynthesis; 3-deoxy-D-manno-octulosonate from D-ribulose 5-phosphate: step 2/3. It participates in bacterial outer membrane biogenesis; lipopolysaccharide biosynthesis. In Shewanella baltica (strain OS223), this protein is 2-dehydro-3-deoxyphosphooctonate aldolase.